Here is a 142-residue protein sequence, read N- to C-terminus: Small ribosomal subunit protein uS12 (142 aa).

Belongs to the universal ribosomal protein uS12 family. Part of the 30S ribosomal subunit.

Functionally, with S4 and S5 plays an important role in translational accuracy. Located at the interface of the 30S and 50S subunits. The chain is Small ribosomal subunit protein uS12 from Methanothrix thermoacetophila (strain DSM 6194 / JCM 14653 / NBRC 101360 / PT) (Methanosaeta thermophila).